The primary structure comprises 229 residues: UPF0173 metal-dependent hydrolase Hbut_0886 (229 aa).

Belongs to the UPF0173 family.

This chain is UPF0173 metal-dependent hydrolase Hbut_0886, found in Hyperthermus butylicus (strain DSM 5456 / JCM 9403 / PLM1-5).